Consider the following 122-residue polypeptide: Small ribosomal subunit protein uS13 (122 aa).

The segment at 92–122 is disordered; that stretch reads HRRGLPVRGQRTHTNARTRKGPAKPIAGKKK.

It belongs to the universal ribosomal protein uS13 family. Part of the 30S ribosomal subunit. Forms a loose heterodimer with protein S19. Forms two bridges to the 50S subunit in the 70S ribosome.

Located at the top of the head of the 30S subunit, it contacts several helices of the 16S rRNA. In the 70S ribosome it contacts the 23S rRNA (bridge B1a) and protein L5 of the 50S subunit (bridge B1b), connecting the 2 subunits; these bridges are implicated in subunit movement. Contacts the tRNAs in the A and P-sites. This chain is Small ribosomal subunit protein uS13, found in Paracoccus denitrificans (strain Pd 1222).